Here is a 502-residue protein sequence, read N- to C-terminus: Glycerol kinase (502 aa).

Threonine 14 provides a ligand contact to ADP. ATP-binding residues include threonine 14, threonine 15, and serine 16. Threonine 14 is a binding site for sn-glycerol 3-phosphate. Arginine 18 serves as a coordination point for ADP. Sn-glycerol 3-phosphate is bound by residues arginine 84, glutamate 85, tyrosine 136, and aspartate 246. Arginine 84, glutamate 85, tyrosine 136, aspartate 246, and glutamine 247 together coordinate glycerol. The ADP site is built by threonine 268 and glycine 311. Positions 268, 311, 315, and 412 each coordinate ATP. The ADP site is built by glycine 412 and asparagine 416.

Belongs to the FGGY kinase family. In terms of assembly, homotetramer and homodimer (in equilibrium). Heterodimer with EIIA-Glc. Binds 1 zinc ion per glycerol kinase EIIA-Glc dimer. The zinc ion is important for dimerization.

It catalyses the reaction glycerol + ATP = sn-glycerol 3-phosphate + ADP + H(+). Its pathway is polyol metabolism; glycerol degradation via glycerol kinase pathway; sn-glycerol 3-phosphate from glycerol: step 1/1. With respect to regulation, activity of this regulatory enzyme is affected by several metabolites. Allosterically and non-competitively inhibited by fructose 1,6-bisphosphate (FBP) and unphosphorylated phosphocarrier protein EIIA-Glc (III-Glc), an integral component of the bacterial phosphotransferase (PTS) system. Its function is as follows. Key enzyme in the regulation of glycerol uptake and metabolism. Catalyzes the phosphorylation of glycerol to yield sn-glycerol 3-phosphate. This chain is Glycerol kinase, found in Escherichia coli (strain ATCC 8739 / DSM 1576 / NBRC 3972 / NCIMB 8545 / WDCM 00012 / Crooks).